Reading from the N-terminus, the 501-residue chain is Ribose import ATP-binding protein RbsA (501 aa).

ABC transporter domains are found at residues 6–242 and 253–495; these read LQLS…VGRK and VHGQ…VGKK. 38–45 is an ATP binding site; that stretch reads GENGAGKS.

It belongs to the ABC transporter superfamily. Ribose importer (TC 3.A.1.2.1) family. The complex is composed of an ATP-binding protein (RbsA), two transmembrane proteins (RbsC) and a solute-binding protein (RbsB).

It is found in the cell inner membrane. The catalysed reaction is D-ribose(out) + ATP + H2O = D-ribose(in) + ADP + phosphate + H(+). Part of the ABC transporter complex RbsABC involved in ribose import. Responsible for energy coupling to the transport system. The chain is Ribose import ATP-binding protein RbsA from Vibrio vulnificus (strain CMCP6).